Here is a 632-residue protein sequence, read N- to C-terminus: MAEETQHNKLAAAKKKLKEYWQKNRPRVPAGVNRNRKTNGSIPETATSGGCQPPGDSATGFHREGPTSSATLKDLESPCQERAVVLDSTSVKISRLKNTIKSLKQQKKQVEHQLEEEKKANNERQKAERELEVQIQTLIIQKEELNTDLYHMERSLRYFEEESKDLAVRLQHSLQCKGELESALSAVIATEKKKANQLSSCSKAHTEWELEQSLQDQALLKAQLTQLKESFQQLQLERDECAEHIEGERARWHQRMSKMSQEICTLKKEKQQDMRRVEELERSLSKLKNQMAEPLPPEPPAVPSEVELQHLRKELERVAGELQSQVKNNQHISLLNRRQEERIREQEERLRKQEERLQEQHEKLRQLAKPQSVFEELNNENKSTLQLEQQVKELQEKLGEEHLEAASQQNQQLTAQLSLMALPGEGHGGEHLDSEGEEAPRPMPSVPEDPESREAMSSFMDHLKEKADLSELVKKQELRFIQYWQERCHQKIHHLLSEPGGRAKDAALGGGHHQAGAQGGDEGEAAGAAADGIAAYSNYNNGHRKFLAAAHNSADEPGPGAPAPQELGAADKHGDLREVTLTSSAQGEAREDPLLDKPTAQPIVQDHQEHPGLGSNCCVPLFCWAWLPRRRR.

The segment at 1-76 (MAEETQHNKL…TSSATLKDLE (76 aa)) is disordered. The segment covering 38-50 (TNGSIPETATSGG) has biased composition (polar residues). 2 coiled-coil regions span residues 85–150 (VLDS…TDLY) and 209–421 (ELEQ…SLMA). Disordered regions lie at residues 423-452 (PGEGHGGEHLDSEGEEAPRPMPSVPEDPES), 505-524 (DAALGGGHHQAGAQGGDEGE), and 552-612 (NSAD…EHPG). The span at 427-440 (HGGEHLDSEGEEAP) shows a compositional bias: basic and acidic residues. Positions 508 to 520 (LGGGHHQAGAQGG) are enriched in gly residues. Positions 569–578 (AADKHGDLRE) are enriched in basic and acidic residues.

This sequence belongs to the GOLGA6 family.

The protein is Golgin subfamily A member 8O (GOLGA8O) of Homo sapiens (Human).